The following is a 72-amino-acid chain: Mitotic-spindle organizing protein 1 (72 aa).

The protein belongs to the MOZART1 family. As to quaternary structure, part of the gamma-tubulin complex.

It is found in the cytoplasm. Its subcellular location is the cytoskeleton. It localises to the microtubule organizing center. The protein resides in the centrosome. The protein localises to the spindle. Functionally, required for gamma-tubulin complex recruitment to the centrosome. The sequence is that of Mitotic-spindle organizing protein 1 (mzt1) from Xenopus laevis (African clawed frog).